A 273-amino-acid chain; its full sequence is Large ribosomal subunit protein uL2 (273 aa).

Positions 221-262 (RGTAMNPVDHPHGGGEGRNFGKHPVTPWGVQTKGKKTRHNKR) are disordered. Positions 253-262 (KGKKTRHNKR) are enriched in basic residues.

This sequence belongs to the universal ribosomal protein uL2 family. As to quaternary structure, part of the 50S ribosomal subunit. Forms a bridge to the 30S subunit in the 70S ribosome.

Functionally, one of the primary rRNA binding proteins. Required for association of the 30S and 50S subunits to form the 70S ribosome, for tRNA binding and peptide bond formation. It has been suggested to have peptidyltransferase activity; this is somewhat controversial. Makes several contacts with the 16S rRNA in the 70S ribosome. The chain is Large ribosomal subunit protein uL2 from Haemophilus ducreyi (strain 35000HP / ATCC 700724).